Consider the following 230-residue polypeptide: Orotidine 5'-phosphate decarboxylase (230 aa).

Substrate-binding positions include Asp-8, Lys-32, 59-68 (DLKLYDIPNT), Thr-118, Arg-178, Gln-187, Gly-207, and Arg-208. The active-site Proton donor is Lys-61.

Belongs to the OMP decarboxylase family. Type 1 subfamily. In terms of assembly, homodimer.

It catalyses the reaction orotidine 5'-phosphate + H(+) = UMP + CO2. Its pathway is pyrimidine metabolism; UMP biosynthesis via de novo pathway; UMP from orotate: step 2/2. Catalyzes the decarboxylation of orotidine 5'-monophosphate (OMP) to uridine 5'-monophosphate (UMP). The polypeptide is Orotidine 5'-phosphate decarboxylase (Nautilia profundicola (strain ATCC BAA-1463 / DSM 18972 / AmH)).